Here is a 222-residue protein sequence, read N- to C-terminus: GMP/IMP nucleotidase YrfG (222 aa).

Aspartate 9 serves as the catalytic Nucleophile. Mg(2+)-binding residues include aspartate 9 and aspartate 11. Substrate is bound by residues 9-11 (DVD) and lysine 149. Aspartate 174 serves as a coordination point for Mg(2+).

The protein belongs to the HAD-like hydrolase superfamily. Mg(2+) is required as a cofactor. Mn(2+) serves as cofactor. It depends on Co(2+) as a cofactor. Requires Zn(2+) as cofactor.

It catalyses the reaction a ribonucleoside 5'-phosphate + H2O = a ribonucleoside + phosphate. Functionally, catalyzes the dephosphorylation of different purine nucleotides (GMP and IMP). Also hydrolyzes flavin mononucleotide (FMN). This Escherichia coli (strain K12) protein is GMP/IMP nucleotidase YrfG (yrfG).